Reading from the N-terminus, the 104-residue chain is Toxin-like protein 14 (104 aa).

The signal sequence occupies residues 1–25 (MNTYNARLYIFSLALALVILKGTKC).

In terms of processing, contains 4 disulfide bonds. Expressed by the venom gland.

It is found in the secreted. This chain is Toxin-like protein 14, found in Urodacus yaschenkoi (Inland robust scorpion).